The sequence spans 593 residues: MASSTPSPATSSNAGADPNTTNLRPTTYDTWCGVAHGCTRKLGLKICGFLQRTNSLEEKSRLVSAFRERQSSKNLLSCENSDQGARFRRTETDFSNLFAQDLLPAKNGEEQTAQFLLEVVDILLNYVRKTFDRSTKVLDFHHPHQLLEGMEGFNLELSDHPESLEQILVDCRDTLKYGVRTGHPRFFNQLSTGLDIIGLAGEWLTSTANTNMFTYEIAPVFVLMEQITLKKMREIVGWSNKDGDGIFSPGGAISNMYSIMAARYKYFPEVKTKGMAAVPKLVLFTSEHSHYSIKKAGAALGFGTDNVILIKCNERGKIIPADLEAKILDAKQKGYVPLYVNATAGTTVYGAFDPIQEIADICEKYNLWLHVDAAWGGGLLMSRKHRHKLSGIERANSVTWNPHKMMGVLLQCSAILVKEKGILQGCNQMCAGYLFQPDKQYDVSYDTGDKAIQCGRHVDIFKFWLMWKAKGTVGFENQINKCLELADYLYAKIKNREEFEMVFDGEPEHTNVCFWYIPQSLRGVPDSPERREKLHRVAPKIKALMMESGTTMVGYQPQGDKANFFRMVISNPAATQSDIDFLIEEIERLGQDL.

The span at 1–12 shows a compositional bias: low complexity; that stretch reads MASSTPSPATSS. Positions 1-22 are disordered; it reads MASSTPSPATSSNAGADPNTTN. Position 77 is a phosphoserine (S77). 189-191 serves as a coordination point for 4-aminobutanoate; that stretch reads QLS. K404 carries the N6-(pyridoxal phosphate)lysine modification. R566 contributes to the 4-aminobutanoate binding site.

The protein belongs to the group II decarboxylase family. In terms of assembly, homodimer. The cofactor is pyridoxal 5'-phosphate.

The enzyme catalyses L-glutamate + H(+) = 4-aminobutanoate + CO2. Catalyzes the synthesis of the inhibitory neurotransmitter gamma-aminobutyric acid (GABA) with pyridoxal 5'-phosphate as cofactor. The sequence is that of Glutamate decarboxylase 1 (Gad1) from Mus musculus (Mouse).